Reading from the N-terminus, the 371-residue chain is Solute carrier family 35 member F6 (371 aa).

The first 25 residues, M1–A25, serve as a signal peptide directing secretion. 2 helical membrane passes run F48–L68 and L89–L109. The EamA domain maps to L104–L160. Residue N110 is glycosylated (N-linked (GlcNAc...) asparagine). Transmembrane regions (helical) follow at residues F117–G137, L140–L160, V176–L196, G216–G236, L261–I281, L295–W312, and A317–L336. The disordered stretch occupies residues G347–S371. Phosphothreonine is present on T365.

The protein belongs to the SLC35F solute transporter family. In terms of assembly, interacts with SLC25A5.

It localises to the mitochondrion. The protein resides in the lysosome membrane. Its function is as follows. Involved in the maintenance of mitochondrial membrane potential in pancreatic ductal adenocarcinoma (PDAC) cells. Promotes pancreatic ductal adenocarcinoma (PDAC) cell growth. May play a role as a nucleotide-sugar transporter. This is Solute carrier family 35 member F6 (SLC35F6) from Pongo abelii (Sumatran orangutan).